Here is a 1019-residue protein sequence, read N- to C-terminus: Serine/threonine-protein kinase 31 (1019 aa).

The region spanning 78–137 is the Tudor domain; sequence NLDPNKIYGGLFSEDQCWYRCKVLKIISVEKCLVRYIDYGNTEILNRSDIVEIPLELQFS. Residues 298–355 are a coiled coil; the sequence is EKIKQDQKLIEENEKLKTEKDALLESYKALELKVEQIAQELQQEKAAAVDLTNHLEYT. A Protein kinase domain is found at 710–1019; the sequence is IGLLKYMNSG…TRNGEANFDC (310 aa). Residues 716 to 724 and K737 contribute to the ATP site; that span reads MNSGGLLTM.

It belongs to the protein kinase superfamily. Ser/Thr protein kinase family. In terms of tissue distribution, testis specific.

It catalyses the reaction L-seryl-[protein] + ATP = O-phospho-L-seryl-[protein] + ADP + H(+). The catalysed reaction is L-threonyl-[protein] + ATP = O-phospho-L-threonyl-[protein] + ADP + H(+). The polypeptide is Serine/threonine-protein kinase 31 (STK31) (Homo sapiens (Human)).